A 389-amino-acid chain; its full sequence is Probable zinc transporter zip2 (389 aa).

The next 7 helical transmembrane spans lie at 6–26, 48–68, 88–108, 267–289, 305–325, 329–349, and 368–388; these read GWIL…GIYL, LVTG…ASVM, VFQF…NHFL, VLVA…LYLA, SCSL…GGIG, FLNF…LILS, and HSFI…IFDS.

The protein belongs to the ZIP transporter (TC 2.A.5) family.

The protein resides in the endoplasmic reticulum membrane. Probable zinc transporter that may mediate zinc remobilization from the endoplasmic reticulum under zinc limitation. The sequence is that of Probable zinc transporter zip2 (zip2) from Schizosaccharomyces pombe (strain 972 / ATCC 24843) (Fission yeast).